The following is a 301-amino-acid chain: Probable alpha-L-glutamate ligase (301 aa).

The ATP-grasp domain occupies 104–287 (LQLLARKGIG…VATKVIEFIE (184 aa)). ATP-binding positions include lysine 141, 178–179 (EF), aspartate 187, and 211–213 (RSN). The Mg(2+) site is built by aspartate 248, glutamate 260, and asparagine 262. Mn(2+) is bound by residues aspartate 248, glutamate 260, and asparagine 262.

It belongs to the RimK family. Requires Mg(2+) as cofactor. Mn(2+) is required as a cofactor.

This is Probable alpha-L-glutamate ligase from Nitrosococcus oceani (strain ATCC 19707 / BCRC 17464 / JCM 30415 / NCIMB 11848 / C-107).